A 300-amino-acid polypeptide reads, in one-letter code: uncharacterized protein (300 aa).

Residues 1–7 (MGSTRKG) are Periplasmic-facing. A helical transmembrane segment spans residues 8-28 (MLNVLIAAVLWGSSGVCAQYI). Residues 16 to 145 (VLWGSSGVCA…SLIGTFLLVT (130 aa)) enclose the EamA 1 domain. Over 29–45 (MEQSRMSSQFLTMIRLL) the chain is Cytoplasmic. Residues 46–66 (FAGLILVTFSFMHGDKIFSIL) form a helical membrane-spanning segment. Topologically, residues 67–71 (KNRKD) are periplasmic. Residues 72-92 (ALSLLIFSVVGALTVQLTFLL) traverse the membrane as a helical segment. The Cytoplasmic portion of the chain corresponds to 93–99 (TIEKSNA). A helical membrane pass occupies residues 100–120 (ATATVLQFLSPTIIVAWFALA). Residues 121 to 124 (RRTR) are Periplasmic-facing. The chain crosses the membrane as a helical span at residues 125-145 (PGILVLTAILTSLIGTFLLVT). Topologically, residues 146-151 (HGNPTS) are cytoplasmic. Residues 152–172 (LSISSAALFWGIASAFAAAFY) form a helical membrane-spanning segment. An EamA 2 domain is found at 167–291 (FAAAFYTTWP…ILSSVILISL (125 aa)). The Periplasmic portion of the chain corresponds to 173–184 (TTWPSRLIAQYG). The helical transmembrane segment at 185 to 205 (TLPVVGWSMSFGGLILLPFYA) threads the bilayer. Residues 206 to 216 (KEGTHFAVSGS) lie on the Cytoplasmic side of the membrane. A helical transmembrane segment spans residues 217-237 (LILAFFYLVVIGTSLTFSLYL). The Periplasmic portion of the chain corresponds to 238–263 (KGAQLIGGPKASILSCAEPLSSALLS). Residues 264–284 (LLLLGISFTLPDWLGTLLILS) form a helical membrane-spanning segment. Residues 285 to 300 (SVILISLDSRRRARAA) are Cytoplasmic-facing.

The protein belongs to the EamA transporter family.

It localises to the cell inner membrane. This is an uncharacterized protein from Salmonella typhimurium (strain LT2 / SGSC1412 / ATCC 700720).